We begin with the raw amino-acid sequence, 220 residues long: Deoxyribose-phosphate aldolase (220 aa).

Asp-89 (proton donor/acceptor) is an active-site residue. Lys-151 functions as the Schiff-base intermediate with acetaldehyde in the catalytic mechanism. Lys-180 functions as the Proton donor/acceptor in the catalytic mechanism.

It belongs to the DeoC/FbaB aldolase family. DeoC type 1 subfamily.

Its subcellular location is the cytoplasm. It carries out the reaction 2-deoxy-D-ribose 5-phosphate = D-glyceraldehyde 3-phosphate + acetaldehyde. The protein operates within carbohydrate degradation; 2-deoxy-D-ribose 1-phosphate degradation; D-glyceraldehyde 3-phosphate and acetaldehyde from 2-deoxy-alpha-D-ribose 1-phosphate: step 2/2. In terms of biological role, catalyzes a reversible aldol reaction between acetaldehyde and D-glyceraldehyde 3-phosphate to generate 2-deoxy-D-ribose 5-phosphate. In Streptococcus pneumoniae (strain 70585), this protein is Deoxyribose-phosphate aldolase.